The primary structure comprises 572 residues: Proline--tRNA ligase (572 aa).

This sequence belongs to the class-II aminoacyl-tRNA synthetase family. ProS type 1 subfamily. In terms of assembly, homodimer. May form a tertiary complex with YbaK and t-RNA(Pro).

Its subcellular location is the cytoplasm. It catalyses the reaction tRNA(Pro) + L-proline + ATP = L-prolyl-tRNA(Pro) + AMP + diphosphate. Functionally, catalyzes the attachment of proline to tRNA(Pro) in a two-step reaction: proline is first activated by ATP to form Pro-AMP and then transferred to the acceptor end of tRNA(Pro). As ProRS can inadvertently accommodate and process non-cognate amino acids such as alanine and cysteine, to avoid such errors it has two additional distinct editing activities against alanine. One activity is designated as 'pretransfer' editing and involves the tRNA(Pro)-independent hydrolysis of activated Ala-AMP. The other activity is designated 'posttransfer' editing and involves deacylation of mischarged Ala-tRNA(Pro). The misacylated Cys-tRNA(Pro) is not edited by ProRS, but is probably edited in trans by YbaK. This is Proline--tRNA ligase from Haemophilus influenzae (strain ATCC 51907 / DSM 11121 / KW20 / Rd).